We begin with the raw amino-acid sequence, 300 residues long: Ubiquinone biosynthesis protein COQ4, mitochondrial (300 aa).

Positions 173, 174, 177, and 189 each coordinate Zn(2+).

The protein belongs to the COQ4 family. Component of a multi-subunit COQ enzyme complex, composed of at least COQ3, COQ4, COQ5, COQ6, COQ7 and COQ9. The cofactor is Zn(2+).

It localises to the mitochondrion inner membrane. The enzyme catalyses a 4-hydroxy-3-methoxy-5-(all-trans-polyprenyl)benzoate + H(+) = a 2-methoxy-6-(all-trans-polyprenyl)phenol + CO2. It participates in cofactor biosynthesis; ubiquinone biosynthesis. Its function is as follows. Lyase that catalyzes the C1-decarboxylation of 4-hydroxy-3-methoxy-5-(all-trans-polyprenyl)benzoic acid into 2-methoxy-6-(all-trans-polyprenyl)phenol during ubiquinone biosynthesis. In Cryptococcus neoformans var. neoformans serotype D (strain B-3501A) (Filobasidiella neoformans), this protein is Ubiquinone biosynthesis protein COQ4, mitochondrial.